We begin with the raw amino-acid sequence, 492 residues long: 56 kDa U1 small nuclear ribonucleoprotein component (492 aa).

Positions 1–15 (MRPRRRGLAYHHTKP) are enriched in basic residues. 2 disordered regions span residues 1–35 (MRPR…QRRK) and 300–371 (DQFP…NKPG). A compositionally biased stretch (polar residues) spans 18-30 (QLSQGHYPTTSND). Low complexity predominate over residues 310-321 (SNSPSSNSISSS). The segment covering 329–353 (TSYQTQPQRHAVNKPSNVLNSSNRH) has biased composition (polar residues).

Component of the 18S U1 snRNP particle, a subcomplex of the spliceosome. Interacts with the nuclear cap-binding complex CBC1-CBC2 (yCBC). Directly contacts intronic sequences of substrate pre-RNA.

The protein resides in the nucleus. In terms of biological role, component of the U1 snRNP particle, which recognizes and binds the 5'-splice site of pre-mRNA. Together with other non-snRNP factors, U1 snRNP forms the spliceosomal commitment complex, that targets pre-mRNA to the splicing pathway. This is 56 kDa U1 small nuclear ribonucleoprotein component (SNU56) from Saccharomyces cerevisiae (strain ATCC 204508 / S288c) (Baker's yeast).